The primary structure comprises 349 residues: Green-sensitive opsin-2 (349 aa).

The Extracellular portion of the chain corresponds to 1 to 36; the sequence is MNGTEGNNFYIPMSNRTGLVRSPYEYTQYYLADPWQ. 2 N-linked (GlcNAc...) asparagine glycosylation sites follow: Asn-2 and Asn-15. A helical membrane pass occupies residues 37 to 61; sequence FKALAFYMFFLICFGLPINVLTLLV. The Cytoplasmic portion of the chain corresponds to 62 to 73; the sequence is TAQHKKLRQPLN. The helical transmembrane segment at 74–99 threads the bilayer; it reads YILVNLAFAGTIMAFFGFTVTFYCSI. At 100–113 the chain is on the extracellular side; sequence NGYMALGPTGCAIE. Cys-110 and Cys-187 are joined by a disulfide. The helical transmembrane segment at 114–133 threads the bilayer; that stretch reads GFFATLGGQVALWSLVVLAI. Over 134–152 the chain is Cytoplasmic; it reads ERYIVVCKPMGSFKFSSNH. A helical membrane pass occupies residues 153 to 176; it reads AMAGIAFTWVMASSCAVPPLFGWS. The Extracellular portion of the chain corresponds to 177–202; it reads RYIPEGMQTSCGPDYYTLNPEFNNES. Asn-200 is a glycosylation site (N-linked (GlcNAc...) asparagine). A helical transmembrane segment spans residues 203 to 230; sequence YVLYMFSCHFCVPVTTIFFTYGSLVCTV. At 231–252 the chain is on the cytoplasmic side; that stretch reads KAAAAQQQESESTQKAEREVTR. A helical transmembrane segment spans residues 253 to 276; that stretch reads MVILMVLGFLVAWVPYASFAAWIF. The Extracellular segment spans residues 277-284; it reads FNRGAAFS. The helical transmembrane segment at 285 to 309 threads the bilayer; the sequence is AQAMAIPAFFSKASALFNPIIYVLL. Lys-296 is modified (N6-(retinylidene)lysine). The Cytoplasmic segment spans residues 310 to 349; it reads NKQFRSCMLNTLFCGKSPLGDDESSSVSTSKTEVSSVSPA. A disordered region spans residues 328–349; the sequence is LGDDESSSVSTSKTEVSSVSPA. The segment covering 334 to 349 has biased composition (low complexity); that stretch reads SSVSTSKTEVSSVSPA.

The protein belongs to the G-protein coupled receptor 1 family. Opsin subfamily. In terms of processing, phosphorylated on some or all of the serine and threonine residues present in the C-terminal region.

The protein localises to the membrane. Visual pigments are the light-absorbing molecules that mediate vision. They consist of an apoprotein, opsin, covalently linked to cis-retinal. This is Green-sensitive opsin-2 (opn1mw2) from Danio rerio (Zebrafish).